The primary structure comprises 447 residues: UPF0210 protein LSL_0162 (447 aa).

Belongs to the UPF0210 family. In terms of assembly, homodimer.

The protein is UPF0210 protein LSL_0162 of Ligilactobacillus salivarius (strain UCC118) (Lactobacillus salivarius).